We begin with the raw amino-acid sequence, 239 residues long: tRNA (guanine-N(7)-)-methyltransferase (239 aa).

S-adenosyl-L-methionine is bound by residues E69, E94, D121, and D144. D144 is an active-site residue. K148 lines the substrate pocket. The tract at residues R150 to R155 is interaction with RNA. Residues D180 and T217 to E220 each bind substrate.

It belongs to the class I-like SAM-binding methyltransferase superfamily. TrmB family. In terms of assembly, monomer.

The enzyme catalyses guanosine(46) in tRNA + S-adenosyl-L-methionine = N(7)-methylguanosine(46) in tRNA + S-adenosyl-L-homocysteine. The protein operates within tRNA modification; N(7)-methylguanine-tRNA biosynthesis. Functionally, catalyzes the formation of N(7)-methylguanine at position 46 (m7G46) in tRNA. The polypeptide is tRNA (guanine-N(7)-)-methyltransferase (Escherichia coli O6:K15:H31 (strain 536 / UPEC)).